A 213-amino-acid chain; its full sequence is Thiamine-phosphate synthase (213 aa).

Residues 39-43 (QYRDK) and Asp-71 contribute to the 4-amino-2-methyl-5-(diphosphooxymethyl)pyrimidine site. Residues Asp-72 and Asp-91 each contribute to the Mg(2+) site. Residue Ser-108 participates in 4-amino-2-methyl-5-(diphosphooxymethyl)pyrimidine binding. A 2-[(2R,5Z)-2-carboxy-4-methylthiazol-5(2H)-ylidene]ethyl phosphate-binding site is contributed by 135–137 (TDT). Residue Lys-138 coordinates 4-amino-2-methyl-5-(diphosphooxymethyl)pyrimidine. 2-[(2R,5Z)-2-carboxy-4-methylthiazol-5(2H)-ylidene]ethyl phosphate is bound by residues Gly-165 and 185 to 186 (VS).

This sequence belongs to the thiamine-phosphate synthase family. The cofactor is Mg(2+).

It carries out the reaction 2-[(2R,5Z)-2-carboxy-4-methylthiazol-5(2H)-ylidene]ethyl phosphate + 4-amino-2-methyl-5-(diphosphooxymethyl)pyrimidine + 2 H(+) = thiamine phosphate + CO2 + diphosphate. The catalysed reaction is 2-(2-carboxy-4-methylthiazol-5-yl)ethyl phosphate + 4-amino-2-methyl-5-(diphosphooxymethyl)pyrimidine + 2 H(+) = thiamine phosphate + CO2 + diphosphate. The enzyme catalyses 4-methyl-5-(2-phosphooxyethyl)-thiazole + 4-amino-2-methyl-5-(diphosphooxymethyl)pyrimidine + H(+) = thiamine phosphate + diphosphate. It functions in the pathway cofactor biosynthesis; thiamine diphosphate biosynthesis; thiamine phosphate from 4-amino-2-methyl-5-diphosphomethylpyrimidine and 4-methyl-5-(2-phosphoethyl)-thiazole: step 1/1. In terms of biological role, condenses 4-methyl-5-(beta-hydroxyethyl)thiazole monophosphate (THZ-P) and 2-methyl-4-amino-5-hydroxymethyl pyrimidine pyrophosphate (HMP-PP) to form thiamine monophosphate (TMP). The polypeptide is Thiamine-phosphate synthase (Thermoplasma acidophilum (strain ATCC 25905 / DSM 1728 / JCM 9062 / NBRC 15155 / AMRC-C165)).